Reading from the N-terminus, the 341-residue chain is uncharacterized protein (341 aa).

3 helical membrane-spanning segments follow: residues 6-26, 63-83, and 137-157; these read IIAG…TTLW, LLLC…WVLI, and AQGL…LSAV.

It is found in the cell membrane. This is an uncharacterized protein from Bacillus subtilis (strain 168).